The primary structure comprises 1094 residues: Probable arabinosyltransferase C (1094 aa).

The next 13 helical transmembrane spans lie at 28 to 50 (IARY…TPLL), 232 to 251 (AAMI…LHIL), 264 to 286 (PARW…WWHF), 341 to 360 (SIWM…WVIS), 373 to 392 (TSRA…WLPL), 431 to 453 (IGAL…LVAI), 466 to 488 (RFGV…IPIF), 530 to 552 (SIAR…AMSL), 565 to 582 (SRRI…MMFT), 586 to 608 (WTHH…AVAV), 620 to 642 (TVFA…GWWY), 657 to 679 (WRWS…AAWF), and 700 to 722 (LAGI…EVVS). The span at 817–831 (GSEPGTEGGTTAAPG) shows a compositional bias: low complexity. The interval 817 to 836 (GSEPGTEGGTTAAPGINGSR) is disordered.

It belongs to the emb family.

The protein resides in the cell membrane. Its function is as follows. Arabinosyl transferase responsible for the polymerization of arabinose into the arabinan of arabinogalactan. The chain is Probable arabinosyltransferase C (embC) from Mycobacterium bovis (strain ATCC BAA-935 / AF2122/97).